The primary structure comprises 120 residues: Large ribosomal subunit protein uL18 (120 aa).

Belongs to the universal ribosomal protein uL18 family. Part of the 50S ribosomal subunit; part of the 5S rRNA/L5/L18/L25 subcomplex. Contacts the 5S and 23S rRNAs.

In terms of biological role, this is one of the proteins that bind and probably mediate the attachment of the 5S RNA into the large ribosomal subunit, where it forms part of the central protuberance. This chain is Large ribosomal subunit protein uL18, found in Lawsonia intracellularis (strain PHE/MN1-00).